A 211-amino-acid polypeptide reads, in one-letter code: 3,4-dihydroxy-2-butanone 4-phosphate synthase (211 aa).

Residues 37–38 (RE), D42, 150–154 (RGGHT), and E174 contribute to the D-ribulose 5-phosphate site. E38 is a Mg(2+) binding site. A Mg(2+)-binding site is contributed by H153.

The protein belongs to the DHBP synthase family. As to quaternary structure, homodimer. Mg(2+) is required as a cofactor. The cofactor is Mn(2+).

It carries out the reaction D-ribulose 5-phosphate = (2S)-2-hydroxy-3-oxobutyl phosphate + formate + H(+). Its pathway is cofactor biosynthesis; riboflavin biosynthesis; 2-hydroxy-3-oxobutyl phosphate from D-ribulose 5-phosphate: step 1/1. Functionally, catalyzes the conversion of D-ribulose 5-phosphate to formate and 3,4-dihydroxy-2-butanone 4-phosphate. The sequence is that of 3,4-dihydroxy-2-butanone 4-phosphate synthase from Baumannia cicadellinicola subsp. Homalodisca coagulata.